We begin with the raw amino-acid sequence, 157 residues long: Endoribonuclease YbeY (157 aa).

3 residues coordinate Zn(2+): His121, His125, and His131.

The protein belongs to the endoribonuclease YbeY family. It depends on Zn(2+) as a cofactor.

It is found in the cytoplasm. Its function is as follows. Single strand-specific metallo-endoribonuclease involved in late-stage 70S ribosome quality control and in maturation of the 3' terminus of the 16S rRNA. This chain is Endoribonuclease YbeY, found in Salinispora tropica (strain ATCC BAA-916 / DSM 44818 / JCM 13857 / NBRC 105044 / CNB-440).